Reading from the N-terminus, the 95-residue chain is Acylphosphatase (95 aa).

Residues 5-93 (RAHVFIRGKV…GEFKDFKILP (89 aa)) form the Acylphosphatase-like domain. Catalysis depends on residues arginine 20 and asparagine 38.

The protein belongs to the acylphosphatase family.

It catalyses the reaction an acyl phosphate + H2O = a carboxylate + phosphate + H(+). In Pyrobaculum aerophilum (strain ATCC 51768 / DSM 7523 / JCM 9630 / CIP 104966 / NBRC 100827 / IM2), this protein is Acylphosphatase (acyP).